The following is a 469-amino-acid chain: Neuraminidase (469 aa).

Residues 1–9 are Intravirion-facing; the sequence is MNPNQKIMT. A helical transmembrane segment spans residues 10 to 30; it reads IGSVSLIIAAVCFLMQIAILV. The involved in apical transport and lipid raft association stretch occupies residues 11–33; the sequence is GSVSLIIAAVCFLMQIAILVTTV. At 31–469 the chain is on the virion surface side; the sequence is TTVTLHFKQC…DGANINFMPI (439 aa). The hypervariable stalk region stretch occupies residues 36-88; that stretch reads HFKQCECDSPSNNQVKPCEPIIIERNITEIVYLNNTTIEKETCPKLVEYRNWS. Asn-61, Asn-69, Asn-70, and Asn-86 each carry an N-linked (GlcNAc...) asparagine; by host glycan. The head of neuraminidase stretch occupies residues 91 to 469; that stretch reads QCKITGFAPF…DGANINFMPI (379 aa). 8 disulfide bridges follow: Cys-92–Cys-417, Cys-124–Cys-129, Cys-183–Cys-230, Cys-232–Cys-237, Cys-278–Cys-291, Cys-280–Cys-289, Cys-318–Cys-337, and Cys-421–Cys-447. Arg-118 provides a ligand contact to substrate. An N-linked (GlcNAc...) asparagine; by host glycan is attached at Asn-146. The active-site Proton donor/acceptor is the Asp-151. A substrate-binding site is contributed by Arg-152. Asn-200 and Asn-234 each carry an N-linked (GlcNAc...) asparagine; by host glycan. Residue 276-277 coordinates substrate; sequence EE. A substrate-binding site is contributed by Arg-292. Residues Asp-293, Gly-297, and Asp-324 each contribute to the Ca(2+) site. Positions 323 to 344 are disordered; that stretch reads GDTPRNDDRSSKSNCRNPNNEK. Residues 334–343 show a composition bias toward polar residues; the sequence is KSNCRNPNNE. Arg-371 is a binding site for substrate. A glycan (N-linked (GlcNAc...) asparagine; by host) is linked at Asn-402. The Nucleophile role is filled by Tyr-406.

This sequence belongs to the glycosyl hydrolase 34 family. In terms of assembly, homotetramer. Ca(2+) is required as a cofactor. N-glycosylated.

Its subcellular location is the virion membrane. It is found in the host apical cell membrane. It carries out the reaction Hydrolysis of alpha-(2-&gt;3)-, alpha-(2-&gt;6)-, alpha-(2-&gt;8)- glycosidic linkages of terminal sialic acid residues in oligosaccharides, glycoproteins, glycolipids, colominic acid and synthetic substrates.. With respect to regulation, inhibited by the neuraminidase inhibitors zanamivir (Relenza) and oseltamivir (Tamiflu). These drugs interfere with the release of progeny virus from infected cells and are effective against all influenza strains. Resistance to neuraminidase inhibitors is quite rare. In terms of biological role, catalyzes the removal of terminal sialic acid residues from viral and cellular glycoconjugates. Cleaves off the terminal sialic acids on the glycosylated HA during virus budding to facilitate virus release. Additionally helps virus spread through the circulation by further removing sialic acids from the cell surface. These cleavages prevent self-aggregation and ensure the efficient spread of the progeny virus from cell to cell. Otherwise, infection would be limited to one round of replication. Described as a receptor-destroying enzyme because it cleaves a terminal sialic acid from the cellular receptors. May facilitate viral invasion of the upper airways by cleaving the sialic acid moieties on the mucin of the airway epithelial cells. Likely to plays a role in the budding process through its association with lipid rafts during intracellular transport. May additionally display a raft-association independent effect on budding. Plays a role in the determination of host range restriction on replication and virulence. Sialidase activity in late endosome/lysosome traffic seems to enhance virus replication. This is Neuraminidase from Influenza A virus (strain A/Swine/Hong Kong/3/1976 H3N2).